The following is a 163-amino-acid chain: Transcription elongation factor GreA (163 aa).

The stretch at 11–38 forms a coiled coil; that stretch reads FKQLEKELDRLKKERPGVIQAIKEAREE.

The protein belongs to the GreA/GreB family.

Necessary for efficient RNA polymerase transcription elongation past template-encoded arresting sites. The arresting sites in DNA have the property of trapping a certain fraction of elongating RNA polymerases that pass through, resulting in locked ternary complexes. Cleavage of the nascent transcript by cleavage factors such as GreA or GreB allows the resumption of elongation from the new 3'terminus. GreA releases sequences of 2 to 3 nucleotides. The polypeptide is Transcription elongation factor GreA (Nitratidesulfovibrio vulgaris (strain ATCC 29579 / DSM 644 / CCUG 34227 / NCIMB 8303 / VKM B-1760 / Hildenborough) (Desulfovibrio vulgaris)).